The sequence spans 85 residues: Small ribosomal subunit protein uS17 (85 aa).

It belongs to the universal ribosomal protein uS17 family. As to quaternary structure, part of the 30S ribosomal subunit.

Functionally, one of the primary rRNA binding proteins, it binds specifically to the 5'-end of 16S ribosomal RNA. This is Small ribosomal subunit protein uS17 from Rhodospirillum centenum (strain ATCC 51521 / SW).